The sequence spans 55 residues: Regulatory protein MokB (55 aa).

Overlapping regulatory peptide whose translation enables hokB expression. This is Regulatory protein MokB (mokB) from Escherichia coli (strain K12).